A 108-amino-acid chain; its full sequence is uncharacterized protein (108 aa).

Thr-56 bears the Phosphothreonine mark. Residues 89 to 108 (AQAKGTEQAEALKKGTSKWF) form a disordered region.

It localises to the cytoplasm. This is an uncharacterized protein from Schizosaccharomyces pombe (strain 972 / ATCC 24843) (Fission yeast).